Consider the following 476-residue polypeptide: Glutamyl-tRNA(Gln) amidotransferase subunit A (476 aa).

Catalysis depends on charge relay system residues K70 and S145. The Acyl-ester intermediate role is filled by S169.

Belongs to the amidase family. GatA subfamily. As to quaternary structure, heterotrimer of A, B and C subunits.

It carries out the reaction L-glutamyl-tRNA(Gln) + L-glutamine + ATP + H2O = L-glutaminyl-tRNA(Gln) + L-glutamate + ADP + phosphate + H(+). Allows the formation of correctly charged Gln-tRNA(Gln) through the transamidation of misacylated Glu-tRNA(Gln) in organisms which lack glutaminyl-tRNA synthetase. The reaction takes place in the presence of glutamine and ATP through an activated gamma-phospho-Glu-tRNA(Gln). This chain is Glutamyl-tRNA(Gln) amidotransferase subunit A, found in Methanosarcina acetivorans (strain ATCC 35395 / DSM 2834 / JCM 12185 / C2A).